Consider the following 208-residue polypeptide: Small ribosomal subunit protein eS8 (208 aa).

The interval 1-23 (MGISRDSAHKRRATGGKRKSLRK) is disordered. The segment covering 8-23 (AHKRRATGGKRKSLRK) has biased composition (basic residues).

This sequence belongs to the eukaryotic ribosomal protein eS8 family. Component of the small ribosomal subunit. Identified in a IGF2BP1-dependent mRNP granule complex containing untranslated mRNAs. Part of the small subunit (SSU) processome, composed of more than 70 proteins and the RNA chaperone small nucleolar RNA (snoRNA) U3.

It localises to the cytoplasm. Its subcellular location is the membrane. It is found in the nucleus. The protein localises to the nucleolus. In terms of biological role, component of the small ribosomal subunit. The ribosome is a large ribonucleoprotein complex responsible for the synthesis of proteins in the cell. Part of the small subunit (SSU) processome, first precursor of the small eukaryotic ribosomal subunit. During the assembly of the SSU processome in the nucleolus, many ribosome biogenesis factors, an RNA chaperone and ribosomal proteins associate with the nascent pre-rRNA and work in concert to generate RNA folding, modifications, rearrangements and cleavage as well as targeted degradation of pre-ribosomal RNA by the RNA exosome. The protein is Small ribosomal subunit protein eS8 (RpS8) of Drosophila melanogaster (Fruit fly).